The following is a 121-amino-acid chain: Large ribosomal subunit protein uL18 (121 aa).

It belongs to the universal ribosomal protein uL18 family. Part of the 50S ribosomal subunit; part of the 5S rRNA/L5/L18/L25 subcomplex. Contacts the 5S and 23S rRNAs.

Its function is as follows. This is one of the proteins that bind and probably mediate the attachment of the 5S RNA into the large ribosomal subunit, where it forms part of the central protuberance. This is Large ribosomal subunit protein uL18 from Dehalococcoides mccartyi (strain ATCC BAA-2266 / KCTC 15142 / 195) (Dehalococcoides ethenogenes (strain 195)).